We begin with the raw amino-acid sequence, 163 residues long: Urease accessory protein UreE (163 aa).

The tract at residues 130 to 163 (PFEPEPGAYGGGHGHTHSHDHSHQHDPAGHAHEH) is disordered. Positions 146 to 163 (HSHDHSHQHDPAGHAHEH) are enriched in basic and acidic residues.

It belongs to the UreE family.

The protein localises to the cytoplasm. In terms of biological role, involved in urease metallocenter assembly. Binds nickel. Probably functions as a nickel donor during metallocenter assembly. This is Urease accessory protein UreE from Alkalilimnicola ehrlichii (strain ATCC BAA-1101 / DSM 17681 / MLHE-1).